The primary structure comprises 424 residues: Histidinol dehydrogenase (424 aa).

NAD(+) contacts are provided by Tyr124, Gln186, and Asn209. Residues Ser232, Gln254, and His257 each coordinate substrate. Zn(2+)-binding residues include Gln254 and His257. Active-site proton acceptor residues include Glu322 and His323. 4 residues coordinate substrate: His323, Asp356, Glu410, and His415. A Zn(2+)-binding site is contributed by Asp356. A Zn(2+)-binding site is contributed by His415.

It belongs to the histidinol dehydrogenase family. Requires Zn(2+) as cofactor.

The enzyme catalyses L-histidinol + 2 NAD(+) + H2O = L-histidine + 2 NADH + 3 H(+). It participates in amino-acid biosynthesis; L-histidine biosynthesis; L-histidine from 5-phospho-alpha-D-ribose 1-diphosphate: step 9/9. In terms of biological role, catalyzes the sequential NAD-dependent oxidations of L-histidinol to L-histidinaldehyde and then to L-histidine. This Moorella thermoacetica (strain ATCC 39073 / JCM 9320) protein is Histidinol dehydrogenase.